We begin with the raw amino-acid sequence, 580 residues long: Jasmonoyl--L-amino acid synthetase JAR6 (580 aa).

Serine 100 serves as a coordination point for ATP. Serine 103 serves as a coordination point for jasmonate. ATP-binding positions include methionine 120, threonine 123, glycine 164, asparagine 169, and glycine 332–tryptophan 337. Threonine 167–tyrosine 171 provides a ligand contact to an L-alpha-amino acid. Alanine 329–glycine 332 is a jasmonate binding site. Residue lysine 534 to histidine 538 participates in an L-alpha-amino acid binding.

The protein belongs to the IAA-amido conjugating enzyme family.

It carries out the reaction a jasmonate + an L-alpha-amino acid + ATP = a jasmonyl-L-amino acid + AMP + diphosphate + H(+). In terms of biological role, catalyzes the synthesis of jasmonate-amino acid conjugates by adenylation. Catalyzes the conjugation of jasmonate (JA) to Ile, Leu and Val. Catalyzes the conjugation of JA to Ile that may mediate defense signaling and resistance to the herbivore Manduca sexta caterpillars. The polypeptide is Jasmonoyl--L-amino acid synthetase JAR6 (JAR6) (Nicotiana attenuata (Coyote tobacco)).